The sequence spans 350 residues: Probable V-type proton ATPase subunit d 2 (350 aa).

This sequence belongs to the V-ATPase V0D/AC39 subunit family. V-ATPase is a heteromultimeric enzyme made up of two complexes: the ATP-hydrolytic V1 complex and the proton translocation V0 complex. The V1 complex consists of three catalytic AB heterodimers that form a heterohexamer, three peripheral stalks each consisting of EG heterodimers, one central rotor including subunits D and F, and the regulatory subunits C and H. The proton translocation complex V0 consists of the proton transport subunit a, a ring of proteolipid subunits c9c'', rotary subunit d, subunits e and f, and the accessory subunits VhaAC45 and ATP6AP2.

In terms of biological role, subunit of the V0 complex of vacuolar(H+)-ATPase (V-ATPase), a multisubunit enzyme composed of a peripheral complex (V1) that hydrolyzes ATP and a membrane integral complex (V0) that translocates protons. V-ATPase is responsible for acidifying and maintaining the pH of intracellular compartments and in some cell types, is targeted to the plasma membrane, where it is responsible for acidifying the extracellular environment. May play a role in coupling of proton transport and ATP hydrolysis. The polypeptide is Probable V-type proton ATPase subunit d 2 (VhaAC39-2) (Drosophila melanogaster (Fruit fly)).